Consider the following 99-residue polypeptide: Nucleoid-associated protein UPA3_0088 (99 aa).

Belongs to the YbaB/EbfC family. In terms of assembly, homodimer.

The protein resides in the cytoplasm. Its subcellular location is the nucleoid. Its function is as follows. Binds to DNA and alters its conformation. May be involved in regulation of gene expression, nucleoid organization and DNA protection. The polypeptide is Nucleoid-associated protein UPA3_0088 (Ureaplasma parvum serovar 3 (strain ATCC 27815 / 27 / NCTC 11736)).